The following is a 510-amino-acid chain: Histidine ammonia-lyase (510 aa).

Residues 143–145 (ASG) constitute a cross-link (5-imidazolinone (Ala-Gly)). Residue Ser144 is modified to 2,3-didehydroalanine (Ser).

It belongs to the PAL/histidase family. In terms of processing, contains an active site 4-methylidene-imidazol-5-one (MIO), which is formed autocatalytically by cyclization and dehydration of residues Ala-Ser-Gly.

Its subcellular location is the cytoplasm. The catalysed reaction is L-histidine = trans-urocanate + NH4(+). Its pathway is amino-acid degradation; L-histidine degradation into L-glutamate; N-formimidoyl-L-glutamate from L-histidine: step 1/3. The sequence is that of Histidine ammonia-lyase from Shewanella pealeana (strain ATCC 700345 / ANG-SQ1).